The following is a 421-amino-acid chain: Forkhead box protein J1 (421 aa).

2 disordered regions span residues 1–32 (MAES…LDDS) and 77–110 (ADPA…PPPD). A compositionally biased stretch (gly residues) spans 11-21 (AGPGEEAGPEG). The segment covering 90–99 (KPTSSCTSRS) has biased composition (polar residues). Positions 120-210 (VKPPYSYATL…YAERLLSGAF (91 aa)) form a DNA-binding region, fork-head.

Belongs to the FOXJ1 family. As to expression, predominantly expressed in tissues containing motile cilia.

It localises to the nucleus. Transcription factor specifically required for the formation of motile cilia. Acts by activating transcription of genes that mediate assembly of motile cilia, such as CFAP157. Binds the DNA consensus sequences 5'-HWDTGTTTGTTTA-3' or 5'-KTTTGTTGTTKTW-3' (where H is not G, W is A or T, D is not C, and K is G or T). Activates the transcription of a variety of ciliary proteins in the developing brain and lung. This is Forkhead box protein J1 from Mus musculus (Mouse).